The following is a 186-amino-acid chain: Dynactin subunit 3 (186 aa).

Residue Ala2 is modified to N-acetylalanine. A coiled-coil region spans residues 135–157 (QQQDQCVEITEESKALLEEYNKT).

It belongs to the dynactin subunit 3 family. As to quaternary structure, subunit of dynactin, a multiprotein complex part of a tripartite complex with dynein and a adapter, such as BICDL1, BICD2 or HOOK3. The dynactin complex is built around ACTR1A/ACTB filament and consists of an actin-related filament composed of a shoulder domain, a pointed end and a barbed end. Its length is defined by its flexible shoulder domain. The soulder is composed of 2 DCTN1 subunits, 4 DCTN2 and 2 DCTN3. The 4 DCNT2 (via N-terminus) bind the ACTR1A filament and act as molecular rulers to determine the length. The pointed end is important for binding dynein-dynactin cargo adapters. Consists of 4 subunits: ACTR10, DCNT4, DCTN5 and DCTN6. The barbed end is composed of a CAPZA1:CAPZB heterodimers, which binds ACTR1A/ACTB filament and dynactin and stabilizes dynactin.

The protein localises to the cytoplasm. The protein resides in the cytoskeleton. It localises to the microtubule organizing center. Its subcellular location is the centrosome. It is found in the chromosome. The protein localises to the centromere. The protein resides in the kinetochore. It localises to the spindle. Its subcellular location is the cleavage furrow. It is found in the midbody. Functionally, part of the dynactin complex that activates the molecular motor dynein for ultra-processive transport along microtubules. Together with dynein may be involved in spindle assembly and cytokinesis. This is Dynactin subunit 3 (DCTN3) from Bos taurus (Bovine).